The sequence spans 130 residues: Phosphoribosyl-AMP cyclohydrolase (130 aa).

Asp77 serves as a coordination point for Mg(2+). Cys78 serves as a coordination point for Zn(2+). The Mg(2+) site is built by Asp79 and Asp81. The Zn(2+) site is built by Cys95 and Cys102.

This sequence belongs to the PRA-CH family. As to quaternary structure, homodimer. Requires Mg(2+) as cofactor. Zn(2+) serves as cofactor.

The protein resides in the cytoplasm. The enzyme catalyses 1-(5-phospho-beta-D-ribosyl)-5'-AMP + H2O = 1-(5-phospho-beta-D-ribosyl)-5-[(5-phospho-beta-D-ribosylamino)methylideneamino]imidazole-4-carboxamide. It functions in the pathway amino-acid biosynthesis; L-histidine biosynthesis; L-histidine from 5-phospho-alpha-D-ribose 1-diphosphate: step 3/9. In terms of biological role, catalyzes the hydrolysis of the adenine ring of phosphoribosyl-AMP. The sequence is that of Phosphoribosyl-AMP cyclohydrolase from Pseudomonas putida (strain W619).